A 127-amino-acid chain; its full sequence is Large ribosomal subunit protein bL20 (127 aa).

It belongs to the bacterial ribosomal protein bL20 family.

Functionally, binds directly to 23S ribosomal RNA and is necessary for the in vitro assembly process of the 50S ribosomal subunit. It is not involved in the protein synthesizing functions of that subunit. The chain is Large ribosomal subunit protein bL20 from Corynebacterium diphtheriae (strain ATCC 700971 / NCTC 13129 / Biotype gravis).